The following is a 343-amino-acid chain: Transcription factor MYB11 (343 aa).

HTH myb-type domains lie at 9–61 (KVGI…INYL) and 62–116 (RSDI…SRKL). 2 DNA-binding regions (H-T-H motif) span residues 37–61 (WRSL…INYL) and 89–112 (WSTI…NSHL). The disordered stretch occupies residues 126–146 (ANTVENAPPPPKRRPGRTSRS).

Expressed in seedlings, roots, cotyledons, leaves and apical meristems.

It localises to the nucleus. Functionally, modulates overall growth by reducing the proliferation activity of meristematic cells and delaying development. Flavonol-specific transcription activator involved in the regulation of several genes of flavonoid biosynthesis. Activates the expression of CHS, CHI, F3H and FLS1. Confers tolerance to UV-B. The protein is Transcription factor MYB11 of Arabidopsis thaliana (Mouse-ear cress).